A 118-amino-acid polypeptide reads, in one-letter code: Ferredoxin-thioredoxin reductase, catalytic chain (118 aa).

A [4Fe-4S] cluster-binding site is contributed by cysteine 57. Cysteine 59 functions as the Nucleophile in the catalytic mechanism. Cysteines 59 and 89 form a disulfide. Residues cysteine 76, cysteine 78, and cysteine 87 each coordinate [4Fe-4S] cluster.

It belongs to the ferredoxin thioredoxin reductase beta subunit family. As to quaternary structure, heterodimer of subunit A (variable subunit) and subunit B (catalytic subunit). Heterodimeric FTR forms a complex with ferredoxin and thioredoxin. [4Fe-4S] cluster is required as a cofactor.

The protein resides in the plastid. Its subcellular location is the chloroplast. The enzyme catalyses [thioredoxin]-disulfide + 2 reduced [2Fe-2S]-[ferredoxin] + 2 H(+) = [thioredoxin]-dithiol + 2 oxidized [2Fe-2S]-[ferredoxin]. Functionally, catalytic subunit of the ferredoxin-thioredoxin reductase (FTR), which catalyzes the two-electron reduction of thioredoxins by the electrons provided by reduced ferredoxin. The sequence is that of Ferredoxin-thioredoxin reductase, catalytic chain (ftrB) from Porphyra purpurea (Red seaweed).